The sequence spans 531 residues: Peptide chain release factor 3 (531 aa).

A tr-type G domain is found at arginine 10–lysine 278. Residues serine 19–threonine 26, aspartate 87–histidine 91, and asparagine 141–aspartate 144 contribute to the GTP site.

Belongs to the TRAFAC class translation factor GTPase superfamily. Classic translation factor GTPase family. PrfC subfamily.

It is found in the cytoplasm. In terms of biological role, increases the formation of ribosomal termination complexes and stimulates activities of RF-1 and RF-2. It binds guanine nucleotides and has strong preference for UGA stop codons. It may interact directly with the ribosome. The stimulation of RF-1 and RF-2 is significantly reduced by GTP and GDP, but not by GMP. The chain is Peptide chain release factor 3 from Neisseria meningitidis serogroup B (strain ATCC BAA-335 / MC58).